The primary structure comprises 302 residues: Sulfate adenylyltransferase subunit 2 (302 aa).

A disordered region spans residues 280-302 (RQGRLIDSDQSASMEQKKRQGYF).

The protein belongs to the PAPS reductase family. CysD subfamily. As to quaternary structure, heterodimer composed of CysD, the smaller subunit, and CysN.

The enzyme catalyses sulfate + ATP + H(+) = adenosine 5'-phosphosulfate + diphosphate. The protein operates within sulfur metabolism; hydrogen sulfide biosynthesis; sulfite from sulfate: step 1/3. With CysN forms the ATP sulfurylase (ATPS) that catalyzes the adenylation of sulfate producing adenosine 5'-phosphosulfate (APS) and diphosphate, the first enzymatic step in sulfur assimilation pathway. APS synthesis involves the formation of a high-energy phosphoric-sulfuric acid anhydride bond driven by GTP hydrolysis by CysN coupled to ATP hydrolysis by CysD. The polypeptide is Sulfate adenylyltransferase subunit 2 (Shewanella baltica (strain OS223)).